Reading from the N-terminus, the 121-residue chain is Small ribosomal subunit protein uS13 (121 aa).

Positions 93 to 121 (RKGLPVRGQKTKTNARTRKGKRKTVGAKS) are disordered.

It belongs to the universal ribosomal protein uS13 family. In terms of assembly, part of the 30S ribosomal subunit. Forms a loose heterodimer with protein S19. Forms two bridges to the 50S subunit in the 70S ribosome.

Functionally, located at the top of the head of the 30S subunit, it contacts several helices of the 16S rRNA. In the 70S ribosome it contacts the 23S rRNA (bridge B1a) and protein L5 of the 50S subunit (bridge B1b), connecting the 2 subunits; these bridges are implicated in subunit movement. Contacts the tRNAs in the A and P-sites. This chain is Small ribosomal subunit protein uS13, found in Campylobacter lari (strain RM2100 / D67 / ATCC BAA-1060).